Here is a 177-residue protein sequence, read N- to C-terminus: Large ribosomal subunit protein uL6 (177 aa).

It belongs to the universal ribosomal protein uL6 family. Part of the 50S ribosomal subunit.

This protein binds to the 23S rRNA, and is important in its secondary structure. It is located near the subunit interface in the base of the L7/L12 stalk, and near the tRNA binding site of the peptidyltransferase center. The sequence is that of Large ribosomal subunit protein uL6 from Pseudomonas paraeruginosa (strain DSM 24068 / PA7) (Pseudomonas aeruginosa (strain PA7)).